The primary structure comprises 271 residues: Effector CFEM6 (271 aa).

Positions 1–17 are cleaved as a signal peptide; it reads MKYSMITLGAFAMMAVA. One can recognise a CFEM domain in the interval 18 to 111; that stretch reads QLSSLPACGQ…LGPATAVVAS (94 aa). 4 cysteine pairs are disulfide-bonded: C25/C68, C29/C63, C42/C49, and C51/C84. Residue D46 participates in heme binding. A lipid anchor (GPI-anchor amidated serine) is attached at S247. Residues 248-271 constitute a propeptide, removed in mature form; it reads SAGGARQTAFAGLAAAAGFAAIIL.

It belongs to the RBT5 family.

It localises to the cell membrane. The protein resides in the secreted. It is found in the host nucleus. The protein localises to the host cell membrane. Its subcellular location is the host chloroplast envelope. Functionally, appears to function during host infection, and may play a role in suppressing the host immune response. The protein is Effector CFEM6 of Marssonina brunnea f. sp. multigermtubi (strain MB_m1) (Marssonina leaf spot fungus).